Here is a 505-residue protein sequence, read N- to C-terminus: RNA-splicing ligase RtcB homolog (505 aa).

5 residues coordinate Mn(2+): aspartate 119, cysteine 122, histidine 227, histidine 259, and histidine 353. 226 to 230 (NHYAE) provides a ligand contact to GMP. GMP is bound by residues 353-354 (HN), 402-405 (GGTM), serine 409, 428-431 (HGAG), and lysine 504. Histidine 428 serves as the catalytic GMP-histidine intermediate.

It belongs to the RtcB family. In terms of assembly, catalytic component of the tRNA-splicing ligase complex. Requires Mn(2+) as cofactor.

It catalyses the reaction a 3'-end 3'-phospho-ribonucleotide-RNA + a 5'-end dephospho-ribonucleoside-RNA + GTP = a ribonucleotidyl-ribonucleotide-RNA + GMP + diphosphate. The enzyme catalyses a 3'-end 2',3'-cyclophospho-ribonucleotide-RNA + a 5'-end dephospho-ribonucleoside-RNA + GTP + H2O = a ribonucleotidyl-ribonucleotide-RNA + GMP + diphosphate + H(+). Catalytic subunit of the tRNA-splicing ligase complex that acts by directly joining spliced tRNA halves to mature-sized tRNAs by incorporating the precursor-derived splice junction phosphate into the mature tRNA as a canonical 3',5'-phosphodiester. May act as an RNA ligase with broad substrate specificity, and may function toward other RNAs. In Nematostella vectensis (Starlet sea anemone), this protein is RNA-splicing ligase RtcB homolog.